The chain runs to 335 residues: Lipoyl synthase (335 aa).

Residues cysteine 55, cysteine 60, cysteine 66, cysteine 81, cysteine 85, cysteine 88, and serine 292 each coordinate [4Fe-4S] cluster. The Radical SAM core domain maps to tryptophan 67 to leucine 281.

The protein belongs to the radical SAM superfamily. Lipoyl synthase family. The cofactor is [4Fe-4S] cluster.

It localises to the cytoplasm. It carries out the reaction [[Fe-S] cluster scaffold protein carrying a second [4Fe-4S](2+) cluster] + N(6)-octanoyl-L-lysyl-[protein] + 2 oxidized [2Fe-2S]-[ferredoxin] + 2 S-adenosyl-L-methionine + 4 H(+) = [[Fe-S] cluster scaffold protein] + N(6)-[(R)-dihydrolipoyl]-L-lysyl-[protein] + 4 Fe(3+) + 2 hydrogen sulfide + 2 5'-deoxyadenosine + 2 L-methionine + 2 reduced [2Fe-2S]-[ferredoxin]. The protein operates within protein modification; protein lipoylation via endogenous pathway; protein N(6)-(lipoyl)lysine from octanoyl-[acyl-carrier-protein]: step 2/2. Functionally, catalyzes the radical-mediated insertion of two sulfur atoms into the C-6 and C-8 positions of the octanoyl moiety bound to the lipoyl domains of lipoate-dependent enzymes, thereby converting the octanoylated domains into lipoylated derivatives. This Kocuria rhizophila (strain ATCC 9341 / DSM 348 / NBRC 103217 / DC2201) protein is Lipoyl synthase.